The primary structure comprises 305 residues: Glycine--tRNA ligase alpha subunit (305 aa).

It belongs to the class-II aminoacyl-tRNA synthetase family. As to quaternary structure, tetramer of two alpha and two beta subunits.

The protein resides in the cytoplasm. It carries out the reaction tRNA(Gly) + glycine + ATP = glycyl-tRNA(Gly) + AMP + diphosphate. In Streptococcus pneumoniae (strain ATCC 700669 / Spain 23F-1), this protein is Glycine--tRNA ligase alpha subunit.